Here is a 463-residue protein sequence, read N- to C-terminus: Chromosomal replication initiator protein DnaA (463 aa).

Residues 1-84 are domain I, interacts with DnaA modulators; sequence MNTNQIILTN…QLFQHYNNAI (84 aa). A domain II region spans residues 84 to 124; it reads IKTVEIITKELPASNQATLELPTKTFADIGSSELNSENIFS. A domain III, AAA+ region region spans residues 125 to 343; it reads TFDIRFTFDN…GALNKVIAHS (219 aa). Residues glycine 171, glycine 173, lysine 174, and threonine 175 each contribute to the ATP site. The tract at residues 344-463 is domain IV, binds dsDNA; it reads NFTAKEITLE…INLMMKILQN (120 aa).

It belongs to the DnaA family. As to quaternary structure, oligomerizes as a right-handed, spiral filament on DNA at oriC.

It is found in the cytoplasm. Functionally, plays an essential role in the initiation and regulation of chromosomal replication. ATP-DnaA binds to the origin of replication (oriC) to initiate formation of the DNA replication initiation complex once per cell cycle. Binds the DnaA box (a 9 base pair repeat at the origin) and separates the double-stranded (ds)DNA. Forms a right-handed helical filament on oriC DNA; dsDNA binds to the exterior of the filament while single-stranded (ss)DNA is stabiized in the filament's interior. The ATP-DnaA-oriC complex binds and stabilizes one strand of the AT-rich DNA unwinding element (DUE), permitting loading of DNA polymerase. After initiation quickly degrades to an ADP-DnaA complex that is not apt for DNA replication. Binds acidic phospholipids. The chain is Chromosomal replication initiator protein DnaA from Rickettsia bellii (strain RML369-C).